Here is a 37-residue protein sequence, read N- to C-terminus: Large ribosomal subunit protein bL36 (37 aa).

It belongs to the bacterial ribosomal protein bL36 family.

This chain is Large ribosomal subunit protein bL36, found in Mycobacterium leprae (strain Br4923).